A 112-amino-acid chain; its full sequence is MDINQNLGNLMKEAQKMQQRMQEAQQQLSQLVVSGESGGGMVTIKMNGRHDVTEVKIKPTLMDEDIEMLEDLIAAAVNDAVRKIEKASKEKISQLTAGLNIPTDLMGDKEGE.

Belongs to the YbaB/EbfC family. Homodimer.

The protein localises to the cytoplasm. It is found in the nucleoid. Functionally, binds to DNA and alters its conformation. May be involved in regulation of gene expression, nucleoid organization and DNA protection. In Legionella pneumophila subsp. pneumophila (strain Philadelphia 1 / ATCC 33152 / DSM 7513), this protein is Nucleoid-associated protein lpg2755.